The following is a 208-amino-acid chain: Platelet-activating factor receptor (208 aa).

The Extracellular segment spans residues methionine 1–threonine 16. A helical transmembrane segment spans residues leucine 17–tryptophan 38. The Cytoplasmic portion of the chain corresponds to valine 39–isoleucine 54. A helical membrane pass occupies residues phenylalanine 55–isoleucine 74. At valine 75–asparagine 91 the chain is on the extracellular side. A disulfide bond links cysteine 90 and cysteine 173. Residues leucine 92 to tyrosine 113 traverse the membrane as a helical segment. Topologically, residues asparagine 114–arginine 133 are cytoplasmic. A helical transmembrane segment spans residues glycine 134 to leucine 155. At aspartate 156–valine 184 the chain is on the extracellular side. Residue asparagine 169 is glycosylated (N-linked (GlcNAc...) asparagine). The chain crosses the membrane as a helical span at residues leucine 185 to cysteine 205. Residues asparagine 206–valine 208 lie on the Cytoplasmic side of the membrane.

This sequence belongs to the G-protein coupled receptor 1 family. Interacts with ARRB1.

It is found in the cell membrane. Receptor for platelet activating factor, a chemotactic phospholipid mediator that possesses potent inflammatory, smooth-muscle contractile and hypotensive activity. Seems to mediate its action via a G protein that activates a phosphatidylinositol-calcium second messenger system. This Macaca mulatta (Rhesus macaque) protein is Platelet-activating factor receptor (PTAFR).